The following is a 352-amino-acid chain: Membrane progestin receptor alpha (352 aa).

At 1-75 (MATVVMEQIG…FLTLFQRHNE (75 aa)) the chain is on the cytoplasmic side. Residues 76–96 (TLNVWTHLLAAFIILVKWQEI) form a helical membrane-spanning segment. Residues 97 to 110 (SETVDFLRDPHAQP) lie on the Extracellular side of the membrane. The helical transmembrane segment at 111–131 (LFIVLLAAFTYLSFSALAHLL) threads the bilayer. At 132–139 (SAKSELSY) the chain is on the cytoplasmic side. The chain crosses the membrane as a helical span at residues 140–160 (YTFYFLDYVGVAVYQYGSALA). The Extracellular segment spans residues 161–175 (HYYYAIEKEWHTKVQ). The chain crosses the membrane as a helical span at residues 176–196 (GLFLPAAAFLAWLTCFGCCYG). Residues 197 to 242 (KYASPELPKVANKLFQVVPSALAYCLDISPVVHRIYSCYQEGCSDP) lie on the Cytoplasmic side of the membrane. A helical membrane pass occupies residues 243-263 (VVAYHFYHVVFFLIGAYFFCC). Residues 264–275 (PHPESLFPGKCD) are Extracellular-facing. Residues 276 to 296 (FIGQGHQLFHVFVVVCTLTQV) form a helical membrane-spanning segment. Over 297–316 (EALRTDFTERRPFYERLHGD) the chain is Cytoplasmic. A helical transmembrane segment spans residues 317–337 (LAHDAVALFIFTACCSALTAF). The Extracellular segment spans residues 338 to 352 (YVRQRVRASLHEKGE).

The protein belongs to the ADIPOR family. Strongly expressed in ovary and brain; lower expression in testis and pituitary. Not detected in heart, kidney, spleen, intestine, gill and muscle.

It localises to the cell membrane. Functionally, steroid membrane receptor. Binds progesterone, progestin and 17-hydroxyprogesterone in vitro. Capable of mediating progestin-induced oocyte maturation. This is Membrane progestin receptor alpha (mpra) from Cynoscion nebulosus (Spotted seatrout).